The chain runs to 373 residues: MDSDDDNMEEVVEGPLDEDDQPHGFCTVTYSSSDRFEGHFVHGEKNGKGKFFFFDGSTLEGFYVDDALQGQGVYTYEDGGALHGFYVDGELNGPAQEFNSDGQLVFRGRYKDNIRYGMCWVYYPDGACVVGEVNEEGEMTGKAVAYVYPDGRTALYGSFVDGELIEARLATLTTQENGRPHFTVDPDSPIYCYDKSTSSCIAGHKLLPDPYESQRVYVGQSLISGAGEGLFAQTEAEANTVMAFYNGVRITHTEVDSRDWSMNGNTISLDEDTVIDVPAPFNMTENYCGSLGHKANHSFSPNCKYDQYVHPRFGQIKCIRTIRAVEKDEELTVAYGYDHEPSGKSGPEAPEWYTKQFLEFQQRESGKGADETC.

Residues 1 to 20 form a disordered region; sequence MDSDDDNMEEVVEGPLDEDD. 3 MORN repeats span residues 36–58, 59–81, and 106–128; these read FEGH…DGST, LEGF…DGGA, and FRGR…DGAC. Residues 214 to 336 enclose the SET domain; sequence QRVYVGQSLI…KDEELTVAYG (123 aa). Residues 226 to 228, N296, and H297 contribute to the S-adenosyl-L-methionine site; that span reads AGE.

Belongs to the class V-like SAM-binding methyltransferase superfamily. Histone-lysine methyltransferase family. SET7 subfamily.

It is found in the nucleus. Its subcellular location is the chromosome. The enzyme catalyses L-lysyl(4)-[histone H3] + S-adenosyl-L-methionine = N(6)-methyl-L-lysyl(4)-[histone H3] + S-adenosyl-L-homocysteine + H(+). It catalyses the reaction L-lysyl-[protein] + S-adenosyl-L-methionine = N(6)-methyl-L-lysyl-[protein] + S-adenosyl-L-homocysteine + H(+). Functionally, histone methyltransferase that specifically monomethylates 'Lys-4' of histone H3. H3 'Lys-4' methylation represents a specific tag for epigenetic transcriptional activation. Plays a central role in the transcriptional activation of genes. Also has methyltransferase activity toward non-histone proteins. This chain is Histone-lysine N-methyltransferase SETD7 (setd7), found in Danio rerio (Zebrafish).